Consider the following 142-residue polypeptide: Peptide methionine sulfoxide reductase MsrB (142 aa).

Positions 3-126 (KEELKKKLSP…NSAALRFIPF (124 aa)) constitute a MsrB domain. Cysteine 115 acts as the Nucleophile in catalysis.

It belongs to the MsrB Met sulfoxide reductase family.

It carries out the reaction L-methionyl-[protein] + [thioredoxin]-disulfide + H2O = L-methionyl-(R)-S-oxide-[protein] + [thioredoxin]-dithiol. The polypeptide is Peptide methionine sulfoxide reductase MsrB (Lactococcus lactis subsp. cremoris (strain SK11)).